The sequence spans 462 residues: GTPase Der (462 aa).

2 EngA-type G domains span residues 3–170 and 201–372; these read ITIA…TSQK and IKIA…FNSI. Residues 9–16, 57–61, 122–125, 207–214, 254–258, and 319–322 contribute to the GTP site; these read GRTNVGKS, DTPGI, NKIE, GKPNVGKS, DTAGI, and NKND. The region spanning 373 to 457 is the KH-like domain; sequence KKIHTSKITE…SIVLYFKSSK (85 aa).

Belongs to the TRAFAC class TrmE-Era-EngA-EngB-Septin-like GTPase superfamily. EngA (Der) GTPase family. As to quaternary structure, associates with the 50S ribosomal subunit.

GTPase that plays an essential role in the late steps of ribosome biogenesis. The polypeptide is GTPase Der (Buchnera aphidicola subsp. Baizongia pistaciae (strain Bp)).